Reading from the N-terminus, the 181-residue chain is Adenylate kinase (181 aa).

Residue 10 to 15 coordinates ATP; the sequence is GAGKGT. Positions 30–59 are NMP; the sequence is STGELFRKNIQDGTKLGVEAKRYLDAGDLV. AMP contacts are provided by residues threonine 31, arginine 36, 57–59, 85–88, and glutamine 92; these read DLV and GYPR. The segment at 126 to 132 is LID; that stretch reads GRGRADD. Arginine 127 is a binding site for ATP. Arginine 129 and arginine 140 together coordinate AMP. Residue glycine 166 participates in ATP binding.

This sequence belongs to the adenylate kinase family. As to quaternary structure, monomer.

It is found in the cytoplasm. It carries out the reaction AMP + ATP = 2 ADP. Its pathway is purine metabolism; AMP biosynthesis via salvage pathway; AMP from ADP: step 1/1. In terms of biological role, catalyzes the reversible transfer of the terminal phosphate group between ATP and AMP. Plays an important role in cellular energy homeostasis and in adenine nucleotide metabolism. This chain is Adenylate kinase, found in Mycobacterium ulcerans (strain Agy99).